A 185-amino-acid chain; its full sequence is Ribosome-recycling factor (185 aa).

The protein belongs to the RRF family.

The protein resides in the cytoplasm. In terms of biological role, responsible for the release of ribosomes from messenger RNA at the termination of protein biosynthesis. May increase the efficiency of translation by recycling ribosomes from one round of translation to another. The protein is Ribosome-recycling factor of Wolbachia sp. subsp. Brugia malayi (strain TRS).